Consider the following 264-residue polypeptide: Glutamate racemase (264 aa).

Substrate is bound by residues 10 to 11 (DS) and 42 to 43 (YG). The active-site Proton donor/acceptor is cysteine 73. Residue 74–75 (NT) participates in substrate binding. Cysteine 183 functions as the Proton donor/acceptor in the catalytic mechanism. 184-185 (TH) provides a ligand contact to substrate.

Belongs to the aspartate/glutamate racemases family.

The enzyme catalyses L-glutamate = D-glutamate. Its pathway is cell wall biogenesis; peptidoglycan biosynthesis. Provides the (R)-glutamate required for cell wall biosynthesis. The protein is Glutamate racemase of Streptococcus gordonii (strain Challis / ATCC 35105 / BCRC 15272 / CH1 / DL1 / V288).